A 1598-amino-acid polypeptide reads, in one-letter code: Mushroom body large-type Kenyon cell-specific protein 1 (1598 aa).

Disordered regions lie at residues 83-105 (PGNLEQIGSRPLHPPASSTSLPA), 140-387 (RHHH…SDGI), 436-462 (PHDDQPPLSPQSDSSSSSRSAESPMSV), and 495-525 (PLVGVQPHQDSATPADQPLDLSAKPKNSQDN). The span at 140 to 151 (RHHHLQNHHHHL) shows a compositional bias: basic residues. Residues 164-174 (QQQQQQQQRQQ) show a composition bias toward low complexity. Residues 175–191 (QRQEERRLRPDEIKVEV) are compositionally biased toward basic and acidic residues. Low complexity predominate over residues 210 to 263 (STDASTPATVTTTGATTTLPAASATGTGPATPSAVVATSNATAAMTTGTTTIPT). Acidic residues predominate over residues 275–291 (EGADDRDDDEENEEEED). Basic and acidic residues-rich tracts occupy residues 292 to 305 (GRGQSEAEKRLKLD), 315 to 324 (LRREKDRGSR), and 335 to 346 (DGTKERTEEVAL). Position 444 is a phosphoserine; by MAPK (Ser444). Low complexity predominate over residues 445-461 (PQSDSSSSSRSAESPMS). One can recognise an HTH psq-type 1 domain in the interval 582 to 634 (VGAGGGRRAYTEEELQAALRDIQSGKLGTRRAAVIYGIPRSTLRNKVYKLAME). Residues 610-630 (TRRAAVIYGIPRSTLRNKVYK) constitute a DNA-binding region (H-T-H motif). Disordered regions lie at residues 636–705 (ERDA…SGAE), 797–877 (RLSK…DSAQ), 962–1045 (GQTV…NYDR), 1082–1145 (ERHL…NGIK), 1248–1283 (ETSAGTSNSRGAAQMSKVPRDVSEGIYDGSGANGSF), and 1301–1598 (RAMT…SVEQ). Low complexity predominate over residues 653–687 (APATTITTITTTTTTTTTTTTTTTTPNTTQNASAT). Residues 694-705 (DEVDDKELSGAE) are compositionally biased toward acidic residues. The span at 820–855 (THPQAQAQAQPQQQQQQQQQQPQQQQQQQQQQQQQQ) shows a compositional bias: low complexity. Positions 965–975 (VSGGGMGGCQP) are enriched in gly residues. The segment covering 1003-1021 (ANAQQGQAQAQAKPQSQEA) has biased composition (low complexity). One can recognise an HTH psq-type 2 domain in the interval 1034–1086 (RPKRGKYRNYDRDSLVEAVRAVQRGEMSVHRAGSYYGVPHSTLEYKVKERHLM). The segment at residues 1062–1082 (VHRAGSYYGVPHSTLEYKVKE) is a DNA-binding region (H-T-H motif). A compositionally biased stretch (basic and acidic residues) spans 1093–1102 (QKQSDDKTKE). Residues 1103–1120 (TSTVTAAAAATNIRPGTA) show a composition bias toward low complexity. The segment covering 1309 to 1318 (QQQQASSQQQ) has biased composition (low complexity). 2 stretches are compositionally biased toward basic and acidic residues: residues 1383-1392 (DRGRNDDGSD) and 1407-1442 (GSRDEDSTRDSTKLDRSSREREVHNGGQQEDRDRKT). Residues 1447–1466 (PQQPQQQQQQQQQQQQQQQQ) are compositionally biased toward low complexity. Basic and acidic residues predominate over residues 1481 to 1497 (TDKKSACDSKLIVDHSS). Residues 1501 to 1547 (QQQQPQQQQQQQQQQQPQQQSQQPQQQQPQPQQQQQQQQQQQPQQQQ) are compositionally biased toward low complexity. The span at 1562 to 1577 (RGYNSGNNRSGEQANS) shows a compositional bias: polar residues.

As to quaternary structure, homodimer. Large-type Kenyon cells of mushroom body.

It is found in the nucleus. Its function is as follows. Transcriptional activator which binds to the consensus sequence 5'-CCCTATCGATCGATCTCTACCT-3'. May play a role in higher-order sensory processing. This is Mushroom body large-type Kenyon cell-specific protein 1 (Mblk-1) from Apis mellifera (Honeybee).